We begin with the raw amino-acid sequence, 219 residues long: 7-carboxy-7-deazaguanine synthase (219 aa).

Substrate-binding positions include 22 to 24 and Arg-37; that span reads IQG. The 192-residue stretch at 28–219 folds into the Radical SAM core domain; it reads LVGLPSVFIR…PQVHKCFDLK (192 aa). Residues Cys-41, Cys-45, and Cys-48 each contribute to the [4Fe-4S] cluster site. Thr-81 is a binding site for substrate. S-adenosyl-L-methionine-binding positions include Gly-83 and 130 to 132; that span reads SPK.

Belongs to the radical SAM superfamily. 7-carboxy-7-deazaguanine synthase family. Homodimer. Requires [4Fe-4S] cluster as cofactor. It depends on S-adenosyl-L-methionine as a cofactor. Mg(2+) serves as cofactor.

It catalyses the reaction 6-carboxy-5,6,7,8-tetrahydropterin + H(+) = 7-carboxy-7-deazaguanine + NH4(+). It participates in purine metabolism; 7-cyano-7-deazaguanine biosynthesis. In terms of biological role, catalyzes the complex heterocyclic radical-mediated conversion of 6-carboxy-5,6,7,8-tetrahydropterin (CPH4) to 7-carboxy-7-deazaguanine (CDG), a step common to the biosynthetic pathways of all 7-deazapurine-containing compounds. This Aquifex aeolicus (strain VF5) protein is 7-carboxy-7-deazaguanine synthase.